Reading from the N-terminus, the 221-residue chain is Large ribosomal subunit protein uL16y (221 aa).

It belongs to the universal ribosomal protein uL16 family. In terms of assembly, component of the small ribosomal subunit. Mature ribosomes consist of a small (40S) and a large (60S) subunit. The 40S subunit contains about 33 different proteins and 1 molecule of RNA (18S). The 60S subunit contains about 49 different proteins and 3 molecules of RNA (25S, 5.8S and 5S).

The protein is Large ribosomal subunit protein uL16y (RPL10B) of Arabidopsis thaliana (Mouse-ear cress).